The sequence spans 257 residues: uncharacterized protein (257 aa).

Positions 1–22 (MIHSKRLKMCLCLIILSVFIGA) are cleaved as a signal peptide. Residue C23 is the site of N-palmitoyl cysteine attachment. C23 carries the S-diacylglycerol cysteine lipid modification.

This sequence belongs to the staphylococcal tandem lipoprotein family.

The protein localises to the cell membrane. This is an uncharacterized protein from Staphylococcus aureus (strain MRSA252).